We begin with the raw amino-acid sequence, 82 residues long: ATP synthase subunit c (82 aa).

The next 2 helical transmembrane spans lie at 7–27 and 53–73; these read FVAL…CIGI and FLLA…AMMF.

The protein belongs to the ATPase C chain family. As to quaternary structure, F-type ATPases have 2 components, F(1) - the catalytic core - and F(0) - the membrane proton channel. F(1) has five subunits: alpha(3), beta(3), gamma(1), delta(1), epsilon(1). F(0) has three main subunits: a(1), b(2) and c(10-14). The alpha and beta chains form an alternating ring which encloses part of the gamma chain. F(1) is attached to F(0) by a central stalk formed by the gamma and epsilon chains, while a peripheral stalk is formed by the delta and b chains.

It is found in the cell inner membrane. Its function is as follows. F(1)F(0) ATP synthase produces ATP from ADP in the presence of a proton or sodium gradient. F-type ATPases consist of two structural domains, F(1) containing the extramembraneous catalytic core and F(0) containing the membrane proton channel, linked together by a central stalk and a peripheral stalk. During catalysis, ATP synthesis in the catalytic domain of F(1) is coupled via a rotary mechanism of the central stalk subunits to proton translocation. Key component of the F(0) channel; it plays a direct role in translocation across the membrane. A homomeric c-ring of between 10-14 subunits forms the central stalk rotor element with the F(1) delta and epsilon subunits. The sequence is that of ATP synthase subunit c from Polaromonas sp. (strain JS666 / ATCC BAA-500).